We begin with the raw amino-acid sequence, 263 residues long: LOB domain-containing protein 41 (263 aa).

In terms of domain architecture, LOB spans 3–109; that stretch reads MSCNGCRVLR…VEAVMKGEPV (107 aa). The segment at 162–204 is disordered; sequence TVAIQAESEGKSDEASHDSSLSHQSEIVAAHEGESKESESNVS. 2 stretches are compositionally biased toward basic and acidic residues: residues 169–178 and 190–200; these read SEGKSDEASH and AAHEGESKESE.

It belongs to the LOB domain-containing protein family. Expressed in young shoots, roots, stems, leaves and flowers.

In Arabidopsis thaliana (Mouse-ear cress), this protein is LOB domain-containing protein 41 (LBD41).